A 429-amino-acid polypeptide reads, in one-letter code: Ribosomal RNA small subunit methyltransferase B (429 aa).

S-adenosyl-L-methionine contacts are provided by residues 254-260 (CAAPGGK), Asp-277, Asp-303, and Asp-322. Cys-375 serves as the catalytic Nucleophile. The interval 397–419 (ALSETGTPDQPGQQNLPGGEEGD) is disordered. A compositionally biased stretch (polar residues) spans 400–412 (ETGTPDQPGQQNL).

Belongs to the class I-like SAM-binding methyltransferase superfamily. RsmB/NOP family.

The protein resides in the cytoplasm. It carries out the reaction cytidine(967) in 16S rRNA + S-adenosyl-L-methionine = 5-methylcytidine(967) in 16S rRNA + S-adenosyl-L-homocysteine + H(+). Functionally, specifically methylates the cytosine at position 967 (m5C967) of 16S rRNA. This chain is Ribosomal RNA small subunit methyltransferase B, found in Salmonella agona (strain SL483).